The following is a 646-amino-acid chain: 1-deoxy-D-xylulose-5-phosphate synthase (646 aa).

Residues histidine 86 and 127–129 each bind thiamine diphosphate; that span reads AHS. Aspartate 158 is a Mg(2+) binding site. Thiamine diphosphate is bound by residues 159–160, asparagine 188, tyrosine 295, and glutamate 377; that span reads GA. A Mg(2+)-binding site is contributed by asparagine 188.

It belongs to the transketolase family. DXPS subfamily. In terms of assembly, homodimer. The cofactor is Mg(2+). It depends on thiamine diphosphate as a cofactor.

The enzyme catalyses D-glyceraldehyde 3-phosphate + pyruvate + H(+) = 1-deoxy-D-xylulose 5-phosphate + CO2. The protein operates within metabolic intermediate biosynthesis; 1-deoxy-D-xylulose 5-phosphate biosynthesis; 1-deoxy-D-xylulose 5-phosphate from D-glyceraldehyde 3-phosphate and pyruvate: step 1/1. Functionally, catalyzes the acyloin condensation reaction between C atoms 2 and 3 of pyruvate and glyceraldehyde 3-phosphate to yield 1-deoxy-D-xylulose-5-phosphate (DXP). The polypeptide is 1-deoxy-D-xylulose-5-phosphate synthase (Burkholderia ambifaria (strain ATCC BAA-244 / DSM 16087 / CCUG 44356 / LMG 19182 / AMMD) (Burkholderia cepacia (strain AMMD))).